A 691-amino-acid chain; its full sequence is Dipeptidyl-peptidase 5 (691 aa).

Residues 1–20 (MKRTILSLLAAVSLAIPVYA) form the signal peptide. Active-site charge relay system residues include serine 549, aspartate 634, and histidine 666.

Belongs to the peptidase S9C family. As to quaternary structure, homodimer.

Its subcellular location is the periplasm. Its function is as follows. Catalyzes the removal of dipeptides from the N-terminus of oligopeptides. Prefers Ala and hydrophobic residues at the P1 position, and has no preference for P2 residues. Shows the highest dipeptidyl peptidase activity toward the synthetic substrate Lys-Ala-methylcoumaryl-7-amide (Lys-Ala-MCA). Is likely involved in amino acid metabolism and bacterial growth/survival of asaccharolytic P.endodontalis, that utilizes amino acids from extracellular proteinaceous nutrients as energy and carbon sources. The chain is Dipeptidyl-peptidase 5 from Porphyromonas endodontalis (strain ATCC 35406 / DSM 24491 / JCM 8526 / CCUG 16442 / BCRC 14492 / NCTC 13058 / HG 370) (Bacteroides endodontalis).